A 242-amino-acid polypeptide reads, in one-letter code: Uridylate kinase (242 aa).

16–19 (KISG) contacts ATP. The involved in allosteric activation by GTP stretch occupies residues 24 to 29 (GDQGFG). Position 58 (Gly58) interacts with UMP. ATP-binding residues include Gly59 and Arg63. Residues Asp78 and 139–146 (TGNPYFTT) each bind UMP. ATP contacts are provided by Thr166, Tyr172, and Asp175.

The protein belongs to the UMP kinase family. As to quaternary structure, homohexamer.

The protein localises to the cytoplasm. The enzyme catalyses UMP + ATP = UDP + ADP. Its pathway is pyrimidine metabolism; CTP biosynthesis via de novo pathway; UDP from UMP (UMPK route): step 1/1. Its activity is regulated as follows. Allosterically activated by GTP. Inhibited by UTP. Its function is as follows. Catalyzes the reversible phosphorylation of UMP to UDP. This Roseobacter denitrificans (strain ATCC 33942 / OCh 114) (Erythrobacter sp. (strain OCh 114)) protein is Uridylate kinase.